The following is a 565-amino-acid chain: DNA-binding protein scr1 (565 aa).

Polar residues predominate over residues 1-19; it reads MSEATTATTTGKPSRSTKN. The interval 1-25 is disordered; the sequence is MSEATTATTTGKPSRSTKNPDAPRP. 2 C2H2-type zinc fingers span residues 26–48 and 54–78; these read YKCP…IRTH and HVCT…ARIH. 4 disordered regions span residues 79-119, 261-303, 390-434, and 466-565; these read TNAN…VHMT, SNAP…STGS, RPVS…DDPS, and ASTP…MTKP. Residues 80–102 are compositionally biased toward low complexity; sequence NANSRRNAAAAAAANNSARSSNS. Polar residues-rich tracts occupy residues 108 to 119, 276 to 286, and 294 to 303; these read EPSTNNAGVHMT, LPSSSNTSPNH, and GLTSNSSTGS. Positions 391-413 are enriched in low complexity; it reads PVSPCSTAPSSPTFSTRSFSPTP. Over residues 466–478 the composition is skewed to polar residues; the sequence is ASTPASGAVSRTP. 3 stretches are compositionally biased toward low complexity: residues 479–492, 517–526, and 537–555; these read SSVS…VNSS, FSSSSRVSVS, and SSST…PAFS.

It belongs to the creA/MIG C2H2-type zinc-finger protein family.

The protein resides in the nucleus. Involved in carbon catabolite repression. Represses the transcription of various genes including the inv1 gene. This Schizosaccharomyces pombe (strain 972 / ATCC 24843) (Fission yeast) protein is DNA-binding protein scr1 (scr1).